Here is a 130-residue protein sequence, read N- to C-terminus: DNA-directed RNA polymerase subunit omega (130 aa).

The disordered stretch occupies residues 109 to 130 (EEELLKGLEGLAPPEEQPEEDE).

It belongs to the RNA polymerase subunit omega family. The RNAP catalytic core consists of 2 alpha, 1 beta, 1 beta' and 1 omega subunit. When a sigma factor is associated with the core the holoenzyme is formed, which can initiate transcription.

The catalysed reaction is RNA(n) + a ribonucleoside 5'-triphosphate = RNA(n+1) + diphosphate. Functionally, promotes RNA polymerase assembly. Latches the N- and C-terminal regions of the beta' subunit thereby facilitating its interaction with the beta and alpha subunits. In Rhodopseudomonas palustris (strain BisB5), this protein is DNA-directed RNA polymerase subunit omega.